Consider the following 144-residue polypeptide: Large ribosomal subunit protein uL16 (144 aa).

It belongs to the universal ribosomal protein uL16 family. Part of the 50S ribosomal subunit.

Binds 23S rRNA and is also seen to make contacts with the A and possibly P site tRNAs. This is Large ribosomal subunit protein uL16 from Pediococcus pentosaceus (strain ATCC 25745 / CCUG 21536 / LMG 10740 / 183-1w).